Here is a 447-residue protein sequence, read N- to C-terminus: Adenylosuccinate synthetase (447 aa).

GTP contacts are provided by residues 12-18 (GDEGKGK) and 40-42 (GHT). Asp-13 acts as the Proton acceptor in catalysis. Mg(2+)-binding residues include Asp-13 and Gly-40. IMP-binding positions include 13–16 (DEGK), 38–41 (NAGH), Thr-128, Arg-142, Gln-223, Thr-238, and Arg-302. His-41 serves as the catalytic Proton donor. 298 to 304 (TTTGRRR) provides a ligand contact to substrate. GTP-binding positions include Arg-304, 330-332 (KLD), and 412-414 (SLG).

This sequence belongs to the adenylosuccinate synthetase family. Homodimer. Mg(2+) serves as cofactor.

The protein resides in the cytoplasm. It catalyses the reaction IMP + L-aspartate + GTP = N(6)-(1,2-dicarboxyethyl)-AMP + GDP + phosphate + 2 H(+). Its pathway is purine metabolism; AMP biosynthesis via de novo pathway; AMP from IMP: step 1/2. In terms of biological role, plays an important role in the de novo pathway of purine nucleotide biosynthesis. Catalyzes the first committed step in the biosynthesis of AMP from IMP. This chain is Adenylosuccinate synthetase, found in Microcystis aeruginosa (strain NIES-843 / IAM M-2473).